A 292-amino-acid chain; its full sequence is Probable 2-(5''-triphosphoribosyl)-3'-dephosphocoenzyme-A synthase (292 aa).

This sequence belongs to the CitG/MdcB family.

The enzyme catalyses 3'-dephospho-CoA + ATP = 2'-(5''-triphospho-alpha-D-ribosyl)-3'-dephospho-CoA + adenine. The protein is Probable 2-(5''-triphosphoribosyl)-3'-dephosphocoenzyme-A synthase of Shigella boydii serotype 18 (strain CDC 3083-94 / BS512).